The primary structure comprises 294 residues: S-adenosylmethionine uptake transporter (294 aa).

The next 10 membrane-spanning stretches (helical) occupy residues 8–28, 41–61, 74–91, 98–118, 121–141, 148–168, 177–197, 207–227, 237–257, and 260–280; these read YLTGIGWFLLSLVSSSANDVI, VAFFRFFFSSIVLLPFVVYYG, ILRGLLLFFGMTSWTYGL, TATVVSFSIPLFTLILAVFFL, NIIWPRWVVTVVGFIGLVVTL, FNPEILYFVLAAISFAMLDII, SMISMLFYSAIVTAIVSLPVA, FELALLFVLGSSGSLILFFLL, ATAPYRYLELVISVIAAYFIF, and FPDKSTLHGAVIIIPTTLFII. EamA domains lie at 21–141 and 160–280; these read SSSA…VVTL and ISFA…LFII.

It belongs to the drug/metabolite transporter (DMT) superfamily. 10 TMS drug/metabolite exporter (DME) (TC 2.A.7.3) family.

Its subcellular location is the cell inner membrane. Transports S-adenosylmethionine. In Rickettsia conorii (strain ATCC VR-613 / Malish 7), this protein is S-adenosylmethionine uptake transporter (sam).